A 328-amino-acid chain; its full sequence is uncharacterized protein (328 aa).

Residues 1–32 form the signal peptide; sequence MFNFRLFSRRGKSLGLLAIVLLLFGFYSLKSS.

It belongs to the glycosyltransferase 34 family.

The protein localises to the endoplasmic reticulum. This is an uncharacterized protein from Schizosaccharomyces pombe (strain 972 / ATCC 24843) (Fission yeast).